Consider the following 346-residue polypeptide: Hexosaminidase D (346 aa).

The active-site Proton donor is the E141.

The protein belongs to the glycosyl hydrolase 20 family. As to quaternary structure, homodimer; disulfide-linked.

It localises to the cytoplasm. It is found in the nucleus. Its subcellular location is the extracellular vesicle. It carries out the reaction Hydrolysis of terminal non-reducing N-acetyl-D-hexosamine residues in N-acetyl-beta-D-hexosaminides.. Inhibited by O-(2-acetamido-2-deoxy-D-glucopyranosylidene)amino N-phenylcarbamate (PUGNAc). Inhibited by galacto-NAG-thiazoline. Has hexosaminidase activity. Responsible for the cleavage of the monosaccharides N-acetylglucosamine (GlcNAc) and N-acetylgalactosamine (GalNAc) from cellular substrates. Has a preference for galactosaminide over glucosaminide substrates. The sequence is that of Hexosaminidase D from Bos taurus (Bovine).